The following is a 1158-amino-acid chain: ATP-dependent helicase/deoxyribonuclease subunit B (1158 aa).

Residues 1–275 (MTLHAYLGRA…QYFNQLYRFN (275 aa)) enclose the UvrD-like helicase ATP-binding domain. ATP is bound at residue 8-15 (GRAGTGKS). Residues 269–583 (NQLYRFNNQD…SIGTMDLAKV (315 aa)) form the UvrD-like helicase C-terminal domain. Cys784, Cys1112, Cys1115, and Cys1121 together coordinate [4Fe-4S] cluster.

This sequence belongs to the helicase family. AddB/RexB type 1 subfamily. Heterodimer of AddA and AddB. Mg(2+) serves as cofactor. The cofactor is [4Fe-4S] cluster.

Its function is as follows. The heterodimer acts as both an ATP-dependent DNA helicase and an ATP-dependent, dual-direction single-stranded exonuclease. Recognizes the chi site generating a DNA molecule suitable for the initiation of homologous recombination. The AddB subunit has 5' -&gt; 3' nuclease activity but not helicase activity. This Staphylococcus aureus (strain MW2) protein is ATP-dependent helicase/deoxyribonuclease subunit B.